Here is a 142-residue protein sequence, read N- to C-terminus: Peptide methionine sulfoxide reductase MsrB (142 aa).

Residues 3–126 form the MsrB domain; the sequence is KEELKKKLSP…NSAALRFIPF (124 aa). Cys-115 functions as the Nucleophile in the catalytic mechanism.

This sequence belongs to the MsrB Met sulfoxide reductase family.

It carries out the reaction L-methionyl-[protein] + [thioredoxin]-disulfide + H2O = L-methionyl-(R)-S-oxide-[protein] + [thioredoxin]-dithiol. In Lactococcus lactis subsp. cremoris (strain MG1363), this protein is Peptide methionine sulfoxide reductase MsrB.